Here is a 197-residue protein sequence, read N- to C-terminus: Small ribosomal subunit protein uS4B (197 aa).

The region spanning serine 88–asparagine 150 is the S4 RNA-binding domain.

Belongs to the universal ribosomal protein uS4 family. As to quaternary structure, part of the 30S ribosomal subunit. Contacts protein S5. The interaction surface between S4 and S5 is involved in control of translational fidelity.

In terms of biological role, one of the primary rRNA binding proteins, it binds directly to 16S rRNA where it nucleates assembly of the body of the 30S subunit. Its function is as follows. With S5 and S12 plays an important role in translational accuracy. The polypeptide is Small ribosomal subunit protein uS4B (Clostridium perfringens (strain ATCC 13124 / DSM 756 / JCM 1290 / NCIMB 6125 / NCTC 8237 / Type A)).